A 188-amino-acid polypeptide reads, in one-letter code: dCTP deaminase (188 aa).

Residues 111-116 (KSTYAR), 135-137 (TLE), Q156, Y170, and Q180 each bind dCTP. The Proton donor/acceptor role is filled by E137.

The protein belongs to the dCTP deaminase family. Homotrimer.

It carries out the reaction dCTP + H2O + H(+) = dUTP + NH4(+). The protein operates within pyrimidine metabolism; dUMP biosynthesis; dUMP from dCTP (dUTP route): step 1/2. Catalyzes the deamination of dCTP to dUTP. In Thioalkalivibrio sulfidiphilus (strain HL-EbGR7), this protein is dCTP deaminase.